A 186-amino-acid polypeptide reads, in one-letter code: Large ribosomal subunit protein uL22 (186 aa).

The protein belongs to the universal ribosomal protein uL22 family. Component of the large ribosomal subunit (LSU). Mature N.crassa ribosomes consist of a small (40S) and a large (60S) subunit. The 40S small subunit contains 1 molecule of ribosomal RNA (18S rRNA) and at least 32 different proteins. The large 60S subunit contains 3 rRNA molecules (26S, 5.8S and 5S rRNA) and at least 42 different proteins.

The protein resides in the cytoplasm. In terms of biological role, component of the ribosome, a large ribonucleoprotein complex responsible for the synthesis of proteins in the cell. The small ribosomal subunit (SSU) binds messenger RNAs (mRNAs) and translates the encoded message by selecting cognate aminoacyl-transfer RNA (tRNA) molecules. The large subunit (LSU) contains the ribosomal catalytic site termed the peptidyl transferase center (PTC), which catalyzes the formation of peptide bonds, thereby polymerizing the amino acids delivered by tRNAs into a polypeptide chain. The nascent polypeptides leave the ribosome through a tunnel in the LSU and interact with protein factors that function in enzymatic processing, targeting, and the membrane insertion of nascent chains at the exit of the ribosomal tunnel. The chain is Large ribosomal subunit protein uL22 (rpl-17) from Neurospora crassa (strain ATCC 24698 / 74-OR23-1A / CBS 708.71 / DSM 1257 / FGSC 987).